A 325-amino-acid chain; its full sequence is 5-dehydro-2-deoxygluconokinase (325 aa).

The protein belongs to the carbohydrate kinase PfkB family.

The enzyme catalyses 5-dehydro-2-deoxy-D-gluconate + ATP = 6-phospho-5-dehydro-2-deoxy-D-gluconate + ADP + H(+). It functions in the pathway polyol metabolism; myo-inositol degradation into acetyl-CoA; acetyl-CoA from myo-inositol: step 5/7. Catalyzes the phosphorylation of 5-dehydro-2-deoxy-D-gluconate (2-deoxy-5-keto-D-gluconate or DKG) to 6-phospho-5-dehydro-2-deoxy-D-gluconate (DKGP). This is 5-dehydro-2-deoxygluconokinase from Listeria innocua serovar 6a (strain ATCC BAA-680 / CLIP 11262).